The sequence spans 149 residues: Deoxyuridine 5'-triphosphate nucleotidohydrolase (149 aa).

Substrate is bound by residues 68–70, Asn-81, 85–87, and Met-95; these read RSG and LID.

This sequence belongs to the dUTPase family. It depends on Mg(2+) as a cofactor.

The enzyme catalyses dUTP + H2O = dUMP + diphosphate + H(+). It participates in pyrimidine metabolism; dUMP biosynthesis; dUMP from dCTP (dUTP route): step 2/2. Its function is as follows. This enzyme is involved in nucleotide metabolism: it produces dUMP, the immediate precursor of thymidine nucleotides and it decreases the intracellular concentration of dUTP so that uracil cannot be incorporated into DNA. In Polynucleobacter necessarius subsp. necessarius (strain STIR1), this protein is Deoxyuridine 5'-triphosphate nucleotidohydrolase.